The primary structure comprises 403 residues: Phosphoglycerate kinase (403 aa).

Residues 22–24 (DLN), Arg37, 60–63 (HLGR), Arg119, and Arg156 each bind substrate. Residues Lys206, Gly302, Glu333, and 359–362 (GGDS) contribute to the ATP site.

It belongs to the phosphoglycerate kinase family. In terms of assembly, monomer.

The protein localises to the cytoplasm. The catalysed reaction is (2R)-3-phosphoglycerate + ATP = (2R)-3-phospho-glyceroyl phosphate + ADP. Its pathway is carbohydrate degradation; glycolysis; pyruvate from D-glyceraldehyde 3-phosphate: step 2/5. The protein is Phosphoglycerate kinase of Streptomyces avermitilis (strain ATCC 31267 / DSM 46492 / JCM 5070 / NBRC 14893 / NCIMB 12804 / NRRL 8165 / MA-4680).